The primary structure comprises 106 residues: Class II hydrophobin 6 (106 aa).

The first 16 residues, 1–16, serve as a signal peptide directing secretion; sequence MQFFTVATLFLATAFA. 4 disulfide bridges follow: cysteine 36/cysteine 86, cysteine 47/cysteine 77, cysteine 48/cysteine 60, and cysteine 87/cysteine 98.

It belongs to the cerato-ulmin hydrophobin family. Homodimer. Homodimers further self-assemble to form highly ordered films at water-air interfaces through intermolecular interactions.

The protein localises to the secreted. It localises to the cell wall. Functionally, aerial growth, conidiation, and dispersal of filamentous fungi in the environment rely upon a capability of their secreting small amphipathic proteins called hydrophobins (HPBs) with low sequence identity. Class I can self-assemble into an outermost layer of rodlet bundles on aerial cell surfaces, conferring cellular hydrophobicity that supports fungal growth, development and dispersal; whereas Class II form highly ordered films at water-air interfaces through intermolecular interactions but contribute nothing to the rodlet structure. HFB2-6 is a class II hydrophobin that has a function in root colonization. Acts as an effector in poplar by up-regulating the expression of genes related to both the jasmonic acid and salicylic acid signal transduction pathways, which not only causes induced systemic resistance (ISR), but also systemic acquired resistance (SAR), giving poplar broad-spectrum resistance to pathogens. Also induces genes related to auxin signal transduction to promote poplar growth. Plays roles in interactions with both biotic and abiotic environmental conditions such as the presence of the pathogen Alternaria alternata or nutrient starvation conditions. The sequence is that of Class II hydrophobin 6 from Trichoderma asperellum (strain ATCC 204424 / CBS 433.97 / NBRC 101777).